A 499-amino-acid chain; its full sequence is Calcium/calmodulin-dependent protein kinase type II subunit delta (499 aa).

At Ala-2 the chain carries N-acetylalanine. In terms of domain architecture, Protein kinase spans Tyr-14 to Ile-272. Residues Leu-20–Val-28 and Lys-43 contribute to the ATP site. The active-site Proton acceptor is Asp-136. The interval His-283–Lys-292 is autoinhibitory domain. Thr-287 carries the phosphothreonine; by autocatalysis modification. A calmodulin-binding region spans residues Leu-291–Lys-301. A phosphothreonine; by autocatalysis mark is found at Thr-306 and Thr-307. At Ser-315 the chain carries Phosphoserine. Residue Lys-318 is modified to N6-acetyllysine. Residues Ser-319 and Ser-330 each carry the phosphoserine modification. Thr-331 carries the phosphothreonine modification. The residue at position 333 (Ser-333) is a Phosphoserine. Thr-336 and Thr-337 each carry phosphothreonine. Residues Ser-404, Ser-490, and Ser-494 each carry the phosphoserine modification.

It belongs to the protein kinase superfamily. CAMK Ser/Thr protein kinase family. CaMK subfamily. CAMK2 is composed of 4 different chains: alpha (CAMK2A), beta (CAMK2B), gamma (CAMK2G), and delta (CAMK2D). The different isoforms assemble into homo- or heteromultimeric holoenzymes composed of 12 subunits with two hexameric rings stacked one on top of the other. Interacts with RRAD CACNB2. Post-translationally, autophosphorylation of Thr-287 following activation by Ca(2+)/calmodulin. Phosphorylation of Thr-287 locks the kinase into an activated state.

The protein localises to the cell membrane. It is found in the sarcolemma. Its subcellular location is the sarcoplasmic reticulum membrane. The catalysed reaction is L-seryl-[protein] + ATP = O-phospho-L-seryl-[protein] + ADP + H(+). It catalyses the reaction L-threonyl-[protein] + ATP = O-phospho-L-threonyl-[protein] + ADP + H(+). Its activity is regulated as follows. Activated by Ca(2+)/calmodulin. Binding of calmodulin results in conformational change that relieves intrasteric autoinhibition and allows autophosphorylation of Thr-287 which turns the kinase in a constitutively active form and confers to the kinase a Ca(2+)-independent activity. Calcium/calmodulin-dependent protein kinase involved in the regulation of Ca(2+) homeostatis and excitation-contraction coupling (ECC) in heart by targeting ion channels, transporters and accessory proteins involved in Ca(2+) influx into the myocyte, Ca(2+) release from the sarcoplasmic reticulum (SR), SR Ca(2+) uptake and Na(+) and K(+) channel transport. Targets also transcription factors and signaling molecules to regulate heart function. In its activated form, is involved in the pathogenesis of dilated cardiomyopathy and heart failure. Contributes to cardiac decompensation and heart failure by regulating SR Ca(2+) release via direct phosphorylation of RYR2 Ca(2+) channel on 'Ser-2808'. In the nucleus, phosphorylates the MEF2 repressor HDAC4, promoting its nuclear export and binding to 14-3-3 protein, and expression of MEF2 and genes involved in the hypertrophic program. Is essential for left ventricular remodeling responses to myocardial infarction. In pathological myocardial remodeling acts downstream of the beta adrenergic receptor signaling cascade to regulate key proteins involved in ECC. Regulates Ca(2+) influx to myocytes by binding and phosphorylating the L-type Ca(2+) channel subunit beta-2 CACNB2. In addition to Ca(2+) channels, can target and regulate the cardiac sarcolemmal Na(+) channel Nav1.5/SCN5A and the K+ channel Kv4.3/KCND3, which contribute to arrhythmogenesis in heart failure. Phosphorylates phospholamban (PLN/PLB), an endogenous inhibitor of SERCA2A/ATP2A2, contributing to the enhancement of SR Ca(2+) uptake that may be important in frequency-dependent acceleration of relaxation (FDAR) and maintenance of contractile function during acidosis. May participate in the modulation of skeletal muscle function in response to exercise, by regulating SR Ca(2+) transport through phosphorylation of PLN/PLB and triadin, a ryanodine receptor-coupling factor. In response to interferon-gamma (IFN-gamma) stimulation, catalyzes phosphorylation of STAT1, stimulating the JAK-STAT signaling pathway. The chain is Calcium/calmodulin-dependent protein kinase type II subunit delta (CAMK2D) from Sus scrofa (Pig).